Reading from the N-terminus, the 40-residue chain is Sapecin-C (40 aa).

Intrachain disulfides connect cysteine 3–cysteine 30, cysteine 16–cysteine 36, and cysteine 20–cysteine 38.

Belongs to the invertebrate defensin family. Type 1 subfamily. As to expression, hemocytes and fat body.

Its subcellular location is the secreted. Its function is as follows. Sapecins, which are potent bactericidal proteins, are produced in response to injury. Sapecin C is cytotoxic to Gram-positive bacteria. This chain is Sapecin-C, found in Sarcophaga peregrina (Flesh fly).